Here is a 207-residue protein sequence, read N- to C-terminus: Large ribosomal subunit protein uL4 (207 aa).

The tract at residues 50-76 is disordered; sequence AVKNRSAVSGGGRKPWKQKGTGRARQG.

Belongs to the universal ribosomal protein uL4 family. As to quaternary structure, part of the 50S ribosomal subunit.

One of the primary rRNA binding proteins, this protein initially binds near the 5'-end of the 23S rRNA. It is important during the early stages of 50S assembly. It makes multiple contacts with different domains of the 23S rRNA in the assembled 50S subunit and ribosome. In terms of biological role, forms part of the polypeptide exit tunnel. This is Large ribosomal subunit protein uL4 from Staphylococcus aureus (strain MRSA252).